A 247-amino-acid polypeptide reads, in one-letter code: Putative cyclin-T1-1 (247 aa).

It belongs to the cyclin family. Cyclin T subfamily.

The sequence is that of Putative cyclin-T1-1 (CYCT1-1) from Arabidopsis thaliana (Mouse-ear cress).